Reading from the N-terminus, the 468-residue chain is Meiotically up-regulated gene 111 protein (468 aa).

A run of 12 helical transmembrane segments spans residues Leu-13–Thr-33, Ile-59–Tyr-79, Val-92–Tyr-112, Phe-116–Thr-136, Ile-158–Ile-178, Leu-190–Phe-210, Pro-285–Ile-305, Phe-330–Val-350, Thr-356–Ala-376, Leu-382–Ala-402, Ala-417–Val-437, and Phe-446–Gly-466.

The protein localises to the membrane. In terms of biological role, has a role in meiosis. This Schizosaccharomyces pombe (strain 972 / ATCC 24843) (Fission yeast) protein is Meiotically up-regulated gene 111 protein (mug111).